The chain runs to 483 residues: MLTLDTLNVMLAVSEEGLIEEMIIALLASPQLAVFFEKFPRLKAAITDDVPRWREALRSRLKDARVPPELTEEVMCYQQSQLLSTPQFIVQLPQILDLLHRLNSPWAEQARQLVDANSTITSALHTLFLQRWRLSLIVQATTLNQQLLEEEREQLLSEVQERMTLSGQLEPILADNNTAAGRLWDMSAGQLKRSDYQLIVKYGEFLNEQPELKRLAEQLGRSREAKSIPRNDAQMETFRTMVREPATVPEQVDGLQQSDDILRLLPPELATLGITELEYEFYRRLVEKQLLTYRLHGESWREKMIERPVVHKDYDEQPRGPFIVCVDTSGSMGGFNEQCAKAFCLALMRIALAENRRCYIMLFSTEIVRYELSGPQGIEQAIRFLSQQFRGGTDLASCFRAIMERLQSREWFDADAVVISDFIAQRLPDDVTSKVKELQRVHQHRFHAVAMSAHGKPGIMRIFDHIWRFDTGMRSRLLRRWRR.

This sequence belongs to the ViaA family. Homodimer. Interacts with RavA.

It is found in the cytoplasm. Functionally, component of the RavA-ViaA chaperone complex, which may act on the membrane to optimize the function of some of the respiratory chains. ViaA stimulates the ATPase activity of RavA. The chain is Regulatory protein ViaA from Escherichia coli O81 (strain ED1a).